The sequence spans 347 residues: Protein RecA (347 aa).

65–72 (GPESSGKT) is an ATP binding site. A disordered region spans residues 328–347 (SPAQPEAPAAGEKPEQEEEF).

Belongs to the RecA family.

The protein localises to the cytoplasm. Can catalyze the hydrolysis of ATP in the presence of single-stranded DNA, the ATP-dependent uptake of single-stranded DNA by duplex DNA, and the ATP-dependent hybridization of homologous single-stranded DNAs. It interacts with LexA causing its activation and leading to its autocatalytic cleavage. The sequence is that of Protein RecA from Vibrio parahaemolyticus serotype O3:K6 (strain RIMD 2210633).